The sequence spans 418 residues: NADH-quinone oxidoreductase subunit H (418 aa).

9 consecutive transmembrane segments (helical) span residues 15–35 (LVLGKALAIFVFLMLNVLVAI), 83–103 (FVYFAAPVISTIPAFTAFAFI), 123–143 (LPVAVLFILGLSAIGVYGIVL), 164–184 (VISYEVAMGLSFAAVFLYAGS), 197–217 (VWFVFLLLPSFVIYLISMVGE), 262–282 (LATALFFGGWHAPWPLNMWAG), 287–307 (WWPVLWFTAKMWTFLFIYFWL), 321–341 (GLGWKLLIPASLVWVLIAAVI), and 349–369 (YAHWTPILVISSIVFAAALVL). Positions 394 to 418 (AAHRAGFHPGIPDTAAAGESAGGRE) are disordered.

This sequence belongs to the complex I subunit 1 family. In terms of assembly, NDH-1 is composed of 14 different subunits. Subunits NuoA, H, J, K, L, M, N constitute the membrane sector of the complex.

It is found in the cell membrane. It carries out the reaction a quinone + NADH + 5 H(+)(in) = a quinol + NAD(+) + 4 H(+)(out). In terms of biological role, NDH-1 shuttles electrons from NADH, via FMN and iron-sulfur (Fe-S) centers, to quinones in the respiratory chain. The immediate electron acceptor for the enzyme in this species is believed to be menaquinone. Couples the redox reaction to proton translocation (for every two electrons transferred, four hydrogen ions are translocated across the cytoplasmic membrane), and thus conserves the redox energy in a proton gradient. This subunit may bind ubiquinone. This Mycobacterium avium (strain 104) protein is NADH-quinone oxidoreductase subunit H.